Reading from the N-terminus, the 95-residue chain is Small ribosomal subunit protein uS19 (95 aa).

The protein belongs to the universal ribosomal protein uS19 family.

Functionally, protein S19 forms a complex with S13 that binds strongly to the 16S ribosomal RNA. In Chloroflexus aggregans (strain MD-66 / DSM 9485), this protein is Small ribosomal subunit protein uS19.